A 378-amino-acid chain; its full sequence is Putative UDP-N-acetylglucosamine 2-epimerase (378 aa).

This sequence belongs to the UDP-N-acetylglucosamine 2-epimerase family.

The protein resides in the cytoplasm. It catalyses the reaction UDP-N-acetyl-alpha-D-glucosamine = UDP-N-acetyl-alpha-D-mannosamine. This Thermotoga maritima (strain ATCC 43589 / DSM 3109 / JCM 10099 / NBRC 100826 / MSB8) protein is Putative UDP-N-acetylglucosamine 2-epimerase.